Here is a 202-residue protein sequence, read N- to C-terminus: Ribonuclease HII (202 aa).

The RNase H type-2 domain maps to 11–200; it reads GLIAGVDEVG…VRKAIEEFNR (190 aa). Asp17, Glu18, and Asp109 together coordinate a divalent metal cation.

The protein belongs to the RNase HII family. The cofactor is Mn(2+). Requires Mg(2+) as cofactor.

It localises to the cytoplasm. It catalyses the reaction Endonucleolytic cleavage to 5'-phosphomonoester.. Functionally, endonuclease that specifically degrades the RNA of RNA-DNA hybrids. This Actinobacillus succinogenes (strain ATCC 55618 / DSM 22257 / CCUG 43843 / 130Z) protein is Ribonuclease HII.